A 375-amino-acid chain; its full sequence is GTPase HflX (375 aa).

The region spanning 194 to 371 (PHIAIVGYAS…RIATLLAGTK (178 aa)) is the Hflx-type G domain. Residues 200 to 207 (GYASAGKT), 225 to 229 (FTTIT), 246 to 249 (DTVG), 314 to 317 (NKID), and 349 to 351 (SAK) contribute to the GTP site. Thr-207 and Thr-227 together coordinate Mg(2+).

The protein belongs to the TRAFAC class OBG-HflX-like GTPase superfamily. HflX GTPase family. As to quaternary structure, monomer. Associates with the 50S ribosomal subunit. Requires Mg(2+) as cofactor.

The protein resides in the cytoplasm. Its function is as follows. GTPase that associates with the 50S ribosomal subunit and may have a role during protein synthesis or ribosome biogenesis. The sequence is that of GTPase HflX from Hyperthermus butylicus (strain DSM 5456 / JCM 9403 / PLM1-5).